Reading from the N-terminus, the 236-residue chain is Small ribosomal subunit protein uS2c (236 aa).

This sequence belongs to the universal ribosomal protein uS2 family.

The protein resides in the plastid. The protein localises to the chloroplast. The sequence is that of Small ribosomal subunit protein uS2c (rps2) from Agrostis stolonifera (Creeping bentgrass).